A 184-amino-acid chain; its full sequence is Tumor necrosis factor alpha-induced protein 8-like protein 2 (184 aa).

This sequence belongs to the TNFAIP8 family. TNFAIP8L2 subfamily. May interact with CASP8; however, such result is unclear since could not reproduce the interaction with CASP8. Interacts with RAC1. Post-translationally, ubiquitinated in a BTRC-depdent manner; leading to degradation mediated through the proteasome pathway.

The protein resides in the cytoplasm. Its subcellular location is the nucleus. It localises to the lysosome. In terms of biological role, acts as a negative regulator of innate and adaptive immunity by maintaining immune homeostasis. Plays a regulatory role in the Toll-like signaling pathway by determining the strength of LPS-induced signaling and gene expression. Inhibits TCR-mediated T-cell activation and negatively regulate T-cell function to prevent hyperresponsiveness. Also inhibits autolysosome formation via negatively modulating MTOR activation by interacting with RAC1 and promoting the disassociation of the RAC1-MTOR complex. Plays an essential role in NK-cell biology by acting as a checkpoint and displaying an expression pattern correlating with NK-cell maturation process and by negatively regulating NK-cell maturation and antitumor immunity. Mechanistically, suppresses IL-15-triggered mTOR activity in NK-cells. The protein is Tumor necrosis factor alpha-induced protein 8-like protein 2 (TNFAIP8L2) of Rhinolophus ferrumequinum (Greater horseshoe bat).